A 172-amino-acid polypeptide reads, in one-letter code: Bifunctional protein PyrR (172 aa).

Positions 93–105 (VILIDDVLYTGRT) match the PRPP-binding motif.

The protein belongs to the purine/pyrimidine phosphoribosyltransferase family. PyrR subfamily. As to quaternary structure, homodimer and homohexamer; in equilibrium.

The enzyme catalyses UMP + diphosphate = 5-phospho-alpha-D-ribose 1-diphosphate + uracil. Regulates transcriptional attenuation of the pyrimidine nucleotide (pyr) operon by binding in a uridine-dependent manner to specific sites on pyr mRNA. This disrupts an antiterminator hairpin in the RNA and favors formation of a downstream transcription terminator, leading to a reduced expression of downstream genes. Functionally, also displays a weak uracil phosphoribosyltransferase activity which is not physiologically significant. The sequence is that of Bifunctional protein PyrR from Streptococcus sanguinis (strain SK36).